A 411-amino-acid chain; its full sequence is Probable G-protein coupled receptor AH9.1 (411 aa).

The Cytoplasmic segment spans residues 1 to 18 (MLLFLLRRIFDCRYKYKL). A helical membrane pass occupies residues 19–39 (FVKALVLFLTIVYNAGLVHFF). At 40 to 55 (FRTTSLDDSPEMNHVD) the chain is on the extracellular side. The helical transmembrane segment at 56-76 (YVAHVIVMPIVLSIGMINQCL) threads the bilayer. At 77-87 (NVCTLLHIRTS) the chain is on the cytoplasmic side. A helical membrane pass occupies residues 88-108 (IFLYLKASAIADILSIVAFIP). Residues 109–131 (FLFRHAKLIDPSWELGMFYHAHL) are Extracellular-facing. Residues 132 to 152 (ELPLINALISASALNIVAMTV) form a helical membrane-spanning segment. Topologically, residues 153 to 176 (DRYVSVCHPIKFFQNNETKPSRRR) are cytoplasmic. The helical transmembrane segment at 177 to 197 (TMLIIVMIYFIALMIYFPSVF) threads the bilayer. Topologically, residues 198–229 (QKKLGVVTDALTNKTIYTIVRNEDVEALQVFK) are extracellular. A glycan (N-linked (GlcNAc...) asparagine) is linked at asparagine 210. Residues 230 to 250 (FYLIVRECICRWGPVLLLVIL) traverse the membrane as a helical segment. Topologically, residues 251 to 299 (NMCVVRGLRKIDKRNWFWRQPSQNSRTETLAQRQLRSPRDDRSRISVLL) are cytoplasmic. The chain crosses the membrane as a helical span at residues 300–320 (FVTSATFIICNIPASVISFFV). Topologically, residues 321 to 333 (RRVSGSLFWQIFR) are extracellular. A helical transmembrane segment spans residues 334–354 (AIANLLQVTSYLYNFYLYALC). Topologically, residues 355–411 (SSEYRHAFLRLFGCRSSLSPTSTGDSPTVRVSVHGKRCHQAVVLLGNENHENPVDEV) are cytoplasmic.

This sequence belongs to the G-protein coupled receptor 1 family.

The protein resides in the cell membrane. In terms of biological role, not known. Putative receptor. The polypeptide is Probable G-protein coupled receptor AH9.1 (Caenorhabditis elegans).